The primary structure comprises 252 residues: Carbohydrate deacetylase (252 aa).

Residues histidine 59 and histidine 122 each coordinate Mg(2+).

It belongs to the YdjC deacetylase family. In terms of assembly, homodimer. Requires Mg(2+) as cofactor.

In terms of biological role, probably catalyzes the deacetylation of acetylated carbohydrates an important step in the degradation of oligosaccharides. The protein is Carbohydrate deacetylase of Vibrio cholerae serotype O1 (strain ATCC 39541 / Classical Ogawa 395 / O395).